Here is a 195-residue protein sequence, read N- to C-terminus: Xanthine phosphoribosyltransferase (195 aa).

Residues leucine 20 and asparagine 27 each contribute to the xanthine site. 5-phospho-alpha-D-ribose 1-diphosphate is bound at residue 128-132 (ANGQA). Residue lysine 156 coordinates xanthine.

This sequence belongs to the purine/pyrimidine phosphoribosyltransferase family. Xpt subfamily. As to quaternary structure, homodimer.

The protein resides in the cytoplasm. It catalyses the reaction XMP + diphosphate = xanthine + 5-phospho-alpha-D-ribose 1-diphosphate. It functions in the pathway purine metabolism; XMP biosynthesis via salvage pathway; XMP from xanthine: step 1/1. Its function is as follows. Converts the preformed base xanthine, a product of nucleic acid breakdown, to xanthosine 5'-monophosphate (XMP), so it can be reused for RNA or DNA synthesis. The protein is Xanthine phosphoribosyltransferase of Lactiplantibacillus plantarum (strain ATCC BAA-793 / NCIMB 8826 / WCFS1) (Lactobacillus plantarum).